Consider the following 265-residue polypeptide: MRIGLFDSGIGGFTVLKKVIELCPNNSFIYLADTARLPYGVKTNNEIKKIAEEISSWFRYQNIDAFLVACNTTNAIALDVIKNNLDIPVFDLIGSAASNIQESRVGVLATPSTVRTKAYTNAILEFKPKTFVIEQPCPAFVPMIEMDNINSDDITDVATGYLQPLLKQKIHSLILGCSHYPLITSSLRKVLPSSVKLIDPAEALSFKLKFFIDSKTRNYSKNKNFVDLKFYVTSNLKNFSNKAKHWLDVFPEVNLVSLQKKGWVS.

Residues 7–8 (DS) and 39–40 (YG) contribute to the substrate site. The active-site Proton donor/acceptor is C70. 71 to 72 (NT) provides a ligand contact to substrate. C177 acts as the Proton donor/acceptor in catalysis.

This sequence belongs to the aspartate/glutamate racemases family.

The catalysed reaction is L-glutamate = D-glutamate. It participates in cell wall biogenesis; peptidoglycan biosynthesis. Its function is as follows. Provides the (R)-glutamate required for cell wall biosynthesis. This Prochlorococcus marinus (strain NATL1A) protein is Glutamate racemase.